The chain runs to 797 residues: N-acetylneuraminate (7)9-O-acetyltransferase (797 aa).

At 1-18 (MAALAYNLGKREINHYFS) the chain is on the cytoplasmic side. The helical transmembrane segment at 19-39 (VRSAKVLALVAVLLLAACHLA) threads the bilayer. The Lumenal segment spans residues 40-313 (SRRYRGNDSC…QPRPPVTLIQ (274 aa)). Asn46 is a glycosylation site (N-linked (GlcNAc...) asparagine). The active-site Acyl-ester intermediate is Ser94. Residues Asn175 and Asn187 are each glycosylated (N-linked (GlcNAc...) asparagine). Active-site residues include Asp270 and His273. A helical transmembrane segment spans residues 314-334 (KLAACFFTLSIIGYLIFYIIH). The Cytoplasmic segment spans residues 335-363 (RNAHRKNKPCTDLESGEEKKNIINTPVSS). A helical transmembrane segment spans residues 364-384 (LEILLQSFCKLGLIMAYFYMC). Over 385 to 395 (DRANLFMKENK) the chain is Lumenal. Residues 396-416 (FYTHSSFFIPIIYILVLGVFY) traverse the membrane as a helical segment. Over 417 to 439 (NENTKETKVLNREQTDEWKGWMQ) the chain is Cytoplasmic. A helical membrane pass occupies residues 440–460 (LVILIYHISGASTFLPVYMHI). Arg461 is a topological domain (lumenal). Residues 462–482 (VLVAAYLFQTGYGHFSYFWIK) traverse the membrane as a helical segment. At 483–486 (GDFG) the chain is on the cytoplasmic side. A helical transmembrane segment spans residues 487–507 (IYRVCQVLFRLNFLVVVLCIV). Residues 508–513 (MDRPYQ) lie on the Lumenal side of the membrane. The chain crosses the membrane as a helical span at residues 514–534 (FYYFVPLVTVWFMVIYVTLAL). Residues 535-547 (WPQIIQKKANGNC) are Cytoplasmic-facing. A helical transmembrane segment spans residues 548–568 (FWHFGLLLKLGFLLLFICFLA). Topologically, residues 569-605 (YSQGAFEKIFSLWPLSKCFELKGNVYEWWFRWRLDRY) are lumenal. Residues 606–626 (VVFHGMLFAFIYLALQKRQIL) form a helical membrane-spanning segment. At 627 to 638 (SEGKGEPLFSNK) the chain is on the cytoplasmic side. Residues 639-659 (ISNFLLFISVVSFLTYSIWAS) traverse the membrane as a helical segment. The Lumenal portion of the chain corresponds to 660 to 671 (SCKNKAECNELH). Residues 672–692 (PSVSVVQILAFILIRNIPGYA) form a helical membrane-spanning segment. Residues 693-698 (RSVYSS) are Cytoplasmic-facing. A helical transmembrane segment spans residues 699 to 719 (FFAWFGKISLELFICQYHIWL). Residues 720-725 (AADTRG) are Lumenal-facing. Residues 726 to 746 (ILVLIPGNPMLNIIVSTFIFV) form a helical membrane-spanning segment. The Cytoplasmic segment spans residues 747 to 770 (CVAHEISQITNDLAQIIIPKDNSS). A helical transmembrane segment spans residues 771 to 791 (LLKRLACIAAFFCGLLILSSI). At 792–797 (QDKSKH) the chain is on the lumenal side.

This sequence belongs to the PC-esterase family. CASD1 subfamily. In terms of processing, N-glycosylated. As to expression, highly expressed in peripheral B lymphocytes.

It is found in the golgi apparatus membrane. It catalyses the reaction CMP-N-acetyl-beta-neuraminate + acetyl-CoA = CMP-N-acetyl-9-O-acetyl-beta-neuraminate + CoA. The enzyme catalyses a ganglioside GD3 (d18:1(4E)) + acetyl-CoA = a ganglioside Ac-O-7-GD3(d18:1(4E)) + CoA. The catalysed reaction is CMP-N-acetyl-beta-neuraminate + acetyl-CoA = CMP-N-acetyl-7-O-acetyl-beta-neuraminate + CoA. In terms of biological role, key enzyme in the biosynthesis of O-acetylated (O-Ac) sialoglycans such as gangliosides O-AcGD3 and O-AcGD2, which affect various processes such as cell-cell interactions, host-pathogen recognition. Catalyzes the transfer of an acetyl group from a donor, the acetyl-coenzyme-A molecule (acetyl-CoA), to the C7/8/9 OH-position of a sialic acid residue. The primary site of O-acetyl group transfer on sialic acid seems to depend on cell type and can be C7, from which the O-acetyl group could subsequently migrate to the C8 and then to the C9 position, or at C9 with possibility of migrating to the C8 and then to the C7 position. Together with ST8SIA1 (GD3 synthase) it increases the levels of ganglioside Ac-O-7-GD3. Can transfer the acetyl group from acetyl-CoA to free sialate (N-acetylneuraminate, Neu5Ac) in vitro, but has preferred substrate specificity for CMP-activated sialate (CMP-Neu5Ac), resulting in the formation of 9-O-acetylated CMP-Neu5Ac (CMP-Neu5,9Ac2). CMP-Neu5,9Ac2 may be used by sialyltransferases as a sialate donor for glycoconjugate acceptors such as ganglioside GD3. O-acetylation at position C9 of ganglioside GD3 can counteract the pro-apoptotic effects of the ganglioside GD3 in tumor cells. This is N-acetylneuraminate (7)9-O-acetyltransferase from Homo sapiens (Human).